A 371-amino-acid polypeptide reads, in one-letter code: uncharacterized protein (371 aa).

33–40 serves as a coordination point for ATP; the sequence is GPLNSGKT.

The protein belongs to the archaeal ATPase family.

This is an uncharacterized protein from Methanocaldococcus jannaschii (strain ATCC 43067 / DSM 2661 / JAL-1 / JCM 10045 / NBRC 100440) (Methanococcus jannaschii).